The primary structure comprises 235 residues: Leucyl/phenylalanyl-tRNA--protein transferase (235 aa).

Belongs to the L/F-transferase family.

The protein resides in the cytoplasm. It carries out the reaction N-terminal L-lysyl-[protein] + L-leucyl-tRNA(Leu) = N-terminal L-leucyl-L-lysyl-[protein] + tRNA(Leu) + H(+). The enzyme catalyses N-terminal L-arginyl-[protein] + L-leucyl-tRNA(Leu) = N-terminal L-leucyl-L-arginyl-[protein] + tRNA(Leu) + H(+). The catalysed reaction is L-phenylalanyl-tRNA(Phe) + an N-terminal L-alpha-aminoacyl-[protein] = an N-terminal L-phenylalanyl-L-alpha-aminoacyl-[protein] + tRNA(Phe). Functionally, functions in the N-end rule pathway of protein degradation where it conjugates Leu, Phe and, less efficiently, Met from aminoacyl-tRNAs to the N-termini of proteins containing an N-terminal arginine or lysine. The protein is Leucyl/phenylalanyl-tRNA--protein transferase of Magnetococcus marinus (strain ATCC BAA-1437 / JCM 17883 / MC-1).